Consider the following 486-residue polypeptide: Cardiolipin synthase A (486 aa).

The next 2 helical transmembrane spans lie at 3–23 (TFYTVVSWLVILGYWLLIAGV) and 38–58 (MAWLLIIYILPLVGIIAYLSF). PLD phosphodiesterase domains lie at 219–246 (MDLRQHRKMIMIDNYIAYTGSMNMVDPR) and 399–426 (EGGLLHTKSVLVDGELSLVGTVNLDMRS). Residues His-224, Lys-226, Asp-231, His-404, Lys-406, and Asp-411 contribute to the active site.

It belongs to the phospholipase D family. Cardiolipin synthase subfamily. ClsA sub-subfamily.

The protein resides in the cell inner membrane. It carries out the reaction 2 a 1,2-diacyl-sn-glycero-3-phospho-(1'-sn-glycerol) = a cardiolipin + glycerol. In terms of biological role, catalyzes the reversible phosphatidyl group transfer from one phosphatidylglycerol molecule to another to form cardiolipin (CL) (diphosphatidylglycerol) and glycerol. The protein is Cardiolipin synthase A of Escherichia fergusonii (strain ATCC 35469 / DSM 13698 / CCUG 18766 / IAM 14443 / JCM 21226 / LMG 7866 / NBRC 102419 / NCTC 12128 / CDC 0568-73).